Here is a 273-residue protein sequence, read N- to C-terminus: Shikimate dehydrogenase (NADP(+)) (273 aa).

Shikimate-binding positions include 15 to 17 and Thr-62; that span reads SKS. The Proton acceptor role is filled by Lys-66. Asp-78 lines the NADP(+) pocket. 2 residues coordinate shikimate: Asn-87 and Asp-103. NADP(+) contacts are provided by residues 127 to 131, 150 to 155, Ala-218, and Gly-238; these read GAGGA and NRTHTR.

The protein belongs to the shikimate dehydrogenase family. Homodimer.

It carries out the reaction shikimate + NADP(+) = 3-dehydroshikimate + NADPH + H(+). It functions in the pathway metabolic intermediate biosynthesis; chorismate biosynthesis; chorismate from D-erythrose 4-phosphate and phosphoenolpyruvate: step 4/7. Involved in the biosynthesis of the chorismate, which leads to the biosynthesis of aromatic amino acids. Catalyzes the reversible NADPH linked reduction of 3-dehydroshikimate (DHSA) to yield shikimate (SA). This Yersinia pseudotuberculosis serotype O:1b (strain IP 31758) protein is Shikimate dehydrogenase (NADP(+)).